The following is a 98-amino-acid chain: Peptides MS9.1 (98 aa).

The signal sequence occupies residues 1–21 (MKQSLILAVLCLALVFATIEA). Positions 22 to 27 (KPKADP) are excised as a propeptide. 2 disulfides stabilise this stretch: Cys-34-Cys-46 and Cys-37-Cys-52. 2 consecutive propeptides follow at residues 63–64 (DP) and 92–98 (DPVRDAE).

It belongs to the sea anemone BBH family.

The protein resides in the secreted. Its subcellular location is the nematocyst. Acts as a positive modulator of mammalian TRPA1, a non-selective cation channel involved in detection of pain, in vitro yet has an analgesic and anti-inflammatory effect in vivo. This Metridium senile (Brown sea anemone) protein is Peptides MS9.1.